The chain runs to 580 residues: Alpha-thujene synthase, chloroplastic (580 aa).

The N-terminal 32 residues, 1 to 32 (MALQLLTPSFSFQHSPSPHKLTTLRYTHHRIR), are a transit peptide targeting the chloroplast. 5 residues coordinate (2E)-geranyl diphosphate: Arg296, Asp333, Asp337, Arg473, and Asp476. Asp333 and Asp337 together coordinate Mg(2+). Positions 333–337 (DDVYD) match the DDXXD motif motif. Residues Asp476, Thr480, and Glu484 each contribute to the Mg(2+) site.

This sequence belongs to the terpene synthase family. Tpsb subfamily. Monomer. The cofactor is Mg(2+). Requires Mn(2+) as cofactor. Expressed in developing and mature fruits. Barely detectable in leaves and shoots.

Its subcellular location is the plastid. The protein localises to the chloroplast. It catalyses the reaction (2E)-geranyl diphosphate = alpha-thujene + diphosphate. Its pathway is secondary metabolite biosynthesis; terpenoid biosynthesis. Monoterpene synthase (TPS) involved in the biosynthesis of monoterpene natural products used by traditional Chinese medicine to treat headache, inflammation and intoxication. Catalyzes the conversion of (2E)-geranyl diphosphate (GPP) into alpha-thujene. This Litsea cubeba (Aromatic litsea) protein is Alpha-thujene synthase, chloroplastic.